Reading from the N-terminus, the 175-residue chain is Putative lipoprotein LppN (175 aa).

The signal sequence occupies residues 1–20 (MRLPGRHVLYALSAVTMLAA). Residue C21 is the site of N-palmitoyl cysteine attachment. C21 carries S-diacylglycerol cysteine lipidation. The interval 31–56 (ASTNMNPTNPPATAETATVSPTPAPQ) is disordered. Over residues 33–48 (TNMNPTNPPATAETAT) the composition is skewed to low complexity. Prevents bacterial uptake by a human macrophage-like cell line regions lie at residues 61–80 (ETWINLQVGDCLADLPPADL), 101–120 (RAPVAVDAAVVSMANRDCAA), and 121–140 (GFAPYTGQSVDTSPYSVAYL).

It localises to the cell membrane. It is found in the cell surface. In terms of biological role, probably involved in bacterial recognition and uptake by its host (human). This is Putative lipoprotein LppN (lppN) from Mycobacterium tuberculosis (strain ATCC 25618 / H37Rv).